Consider the following 580-residue polypeptide: Arginine--tRNA ligase (580 aa).

The 'HIGH' region signature appears at 131–141 (ANPTGPMHVGH).

It belongs to the class-I aminoacyl-tRNA synthetase family. Monomer.

It is found in the cytoplasm. The enzyme catalyses tRNA(Arg) + L-arginine + ATP = L-arginyl-tRNA(Arg) + AMP + diphosphate. The polypeptide is Arginine--tRNA ligase (Cereibacter sphaeroides (strain KD131 / KCTC 12085) (Rhodobacter sphaeroides)).